The chain runs to 228 residues: 5'-methylthioadenosine/S-adenosylhomocysteine nucleosidase (228 aa).

The active-site Proton acceptor is the Glu11. Residues Gly77, Ile151, and 172–173 (ME) each bind substrate. Asp196 functions as the Proton donor in the catalytic mechanism.

This sequence belongs to the PNP/UDP phosphorylase family. MtnN subfamily.

The catalysed reaction is S-adenosyl-L-homocysteine + H2O = S-(5-deoxy-D-ribos-5-yl)-L-homocysteine + adenine. The enzyme catalyses S-methyl-5'-thioadenosine + H2O = 5-(methylsulfanyl)-D-ribose + adenine. It catalyses the reaction 5'-deoxyadenosine + H2O = 5-deoxy-D-ribose + adenine. It participates in amino-acid biosynthesis; L-methionine biosynthesis via salvage pathway; S-methyl-5-thio-alpha-D-ribose 1-phosphate from S-methyl-5'-thioadenosine (hydrolase route): step 1/2. Functionally, catalyzes the irreversible cleavage of the glycosidic bond in both 5'-methylthioadenosine (MTA) and S-adenosylhomocysteine (SAH/AdoHcy) to adenine and the corresponding thioribose, 5'-methylthioribose and S-ribosylhomocysteine, respectively. Also cleaves 5'-deoxyadenosine, a toxic by-product of radical S-adenosylmethionine (SAM) enzymes, into 5-deoxyribose and adenine. This is 5'-methylthioadenosine/S-adenosylhomocysteine nucleosidase from Staphylococcus saprophyticus subsp. saprophyticus (strain ATCC 15305 / DSM 20229 / NCIMB 8711 / NCTC 7292 / S-41).